Consider the following 244-residue polypeptide: tRNA pseudouridine synthase A (244 aa).

Aspartate 52 (nucleophile) is an active-site residue. A substrate-binding site is contributed by tyrosine 110.

It belongs to the tRNA pseudouridine synthase TruA family. Homodimer.

It carries out the reaction uridine(38/39/40) in tRNA = pseudouridine(38/39/40) in tRNA. Functionally, formation of pseudouridine at positions 38, 39 and 40 in the anticodon stem and loop of transfer RNAs. The chain is tRNA pseudouridine synthase A from Clostridium kluyveri (strain ATCC 8527 / DSM 555 / NBRC 12016 / NCIMB 10680 / K1).